The sequence spans 161 residues: NADH-quinone oxidoreductase subunit I (161 aa).

2 consecutive 4Fe-4S ferredoxin-type domains span residues 52 to 82 (LRRY…IEAK) and 92 to 121 (TKYD…EGPN). [4Fe-4S] cluster is bound by residues cysteine 62, cysteine 65, cysteine 68, cysteine 72, cysteine 101, cysteine 104, cysteine 107, and cysteine 111.

The protein belongs to the complex I 23 kDa subunit family. As to quaternary structure, NDH-1 is composed of 14 different subunits. Subunits NuoA, H, J, K, L, M, N constitute the membrane sector of the complex. [4Fe-4S] cluster serves as cofactor.

The protein localises to the cell inner membrane. It carries out the reaction a quinone + NADH + 5 H(+)(in) = a quinol + NAD(+) + 4 H(+)(out). In terms of biological role, NDH-1 shuttles electrons from NADH, via FMN and iron-sulfur (Fe-S) centers, to quinones in the respiratory chain. The immediate electron acceptor for the enzyme in this species is believed to be ubiquinone. Couples the redox reaction to proton translocation (for every two electrons transferred, four hydrogen ions are translocated across the cytoplasmic membrane), and thus conserves the redox energy in a proton gradient. The polypeptide is NADH-quinone oxidoreductase subunit I (Orientia tsutsugamushi (strain Boryong) (Rickettsia tsutsugamushi)).